The chain runs to 382 residues: tRNA-queuosine alpha-mannosyltransferase (382 aa).

The protein belongs to the glycosyltransferase group 1 family. Glycosyltransferase 4 subfamily.

It localises to the cytoplasm. The protein resides in the nucleus. It catalyses the reaction queuosine(34) in tRNA(Asp) + GDP-alpha-D-mannose = O-4''-alpha-D-mannosylqueuosine(34) in tRNA(Asp) + GDP + H(+). Functionally, glycosyltransferase that specifically catalyzes mannosylation of cytoplasmic tRNA(Asp) modified with queuosine at position 34 (queuosine(34)). Mannosylates the cyclopentene moiety of queuosine(34) in tRNA(Asp) to form mannosyl-queuosine(34). Mannosylation of queuosine(34) in tRNA(Asp) is required to slow-down elongation at cognate codons, GAC and GAU, thereby regulating protein translation. The polypeptide is tRNA-queuosine alpha-mannosyltransferase (GTDC1) (Gallus gallus (Chicken)).